Here is a 734-residue protein sequence, read N- to C-terminus: Photosystem I P700 chlorophyll a apoprotein A2 (734 aa).

A run of 8 helical transmembrane segments spans residues 46 to 69 (IFASHFGQLAIIFLWTSGNLFHVA), 135 to 158 (LYTGALFLLFLSTLSLIAGWLHLQ), 175 to 199 (LNHHLSGLFGVSSLAWTGHLVHVAI), 273 to 291 (MAHHHLAIAFIFLIAGHMY), 330 to 353 (IHFQLGLALASLGVITSLVAQHMY), 369 to 395 (AALYTHHQYIAGFIMTGAFAHGAIFFI), 417 to 439 (AIISHLSWASLFLGFHTLGLYVH), and 517 to 535 (FLVHHAIALGLHTTTLILV). [4Fe-4S] cluster is bound by residues Cys559 and Cys568. 2 consecutive transmembrane segments (helical) span residues 575–596 (AFYLAVFWMLNTIGWVTFYWHW) and 643–665 (LSVWAWMFLFGHLVWATGFMFLI). Positions 654, 662, and 670 each coordinate chlorophyll a. A phylloquinone-binding site is contributed by Trp671. A helical membrane pass occupies residues 707 to 727 (LVGLAHFSVGYIFTYAAFLIA).

It belongs to the PsaA/PsaB family. The PsaA/B heterodimer binds the P700 chlorophyll special pair and subsequent electron acceptors. PSI consists of a core antenna complex that captures photons, and an electron transfer chain that converts photonic excitation into a charge separation. The eukaryotic PSI reaction center is composed of at least 11 subunits. The cofactor is P700 is a chlorophyll a/chlorophyll a' dimer, A0 is one or more chlorophyll a, A1 is one or both phylloquinones and FX is a shared 4Fe-4S iron-sulfur center..

The protein localises to the plastid. It localises to the chloroplast thylakoid membrane. It catalyses the reaction reduced [plastocyanin] + hnu + oxidized [2Fe-2S]-[ferredoxin] = oxidized [plastocyanin] + reduced [2Fe-2S]-[ferredoxin]. PsaA and PsaB bind P700, the primary electron donor of photosystem I (PSI), as well as the electron acceptors A0, A1 and FX. PSI is a plastocyanin-ferredoxin oxidoreductase, converting photonic excitation into a charge separation, which transfers an electron from the donor P700 chlorophyll pair to the spectroscopically characterized acceptors A0, A1, FX, FA and FB in turn. Oxidized P700 is reduced on the lumenal side of the thylakoid membrane by plastocyanin. This is Photosystem I P700 chlorophyll a apoprotein A2 from Triticum aestivum (Wheat).